The primary structure comprises 431 residues: GTPase Obg (431 aa).

The Obg domain occupies 1–158 (MFVDQVKISL…IEVTLELKLL (158 aa)). Residues 118–144 (KGGRGGRGNSRFASPRNPAPDFSENGE) are disordered. The OBG-type G domain maps to 159–330 (ADVGLVGFPS…LLYAIADKLE (172 aa)). GTP-binding positions include 165 to 172 (GFPSVGKS), 190 to 194 (FTTIK), 212 to 215 (DLPG), 282 to 285 (NKMD), and 311 to 313 (STF). Serine 172 and threonine 192 together coordinate Mg(2+). Residues 353 to 431 (KHTPSQDKFT…ILGGEFEFVE (79 aa)) enclose the OCT domain.

The protein belongs to the TRAFAC class OBG-HflX-like GTPase superfamily. OBG GTPase family. Monomer. The cofactor is Mg(2+).

Its subcellular location is the cytoplasm. An essential GTPase which binds GTP, GDP and possibly (p)ppGpp with moderate affinity, with high nucleotide exchange rates and a fairly low GTP hydrolysis rate. Plays a role in control of the cell cycle, stress response, ribosome biogenesis and in those bacteria that undergo differentiation, in morphogenesis control. The chain is GTPase Obg from Staphylococcus saprophyticus subsp. saprophyticus (strain ATCC 15305 / DSM 20229 / NCIMB 8711 / NCTC 7292 / S-41).